The primary structure comprises 127 residues: Snaclec CHH-B subunit alpha (127 aa).

Cystine bridges form between Cys4-Cys15, Cys32-Cys120, and Cys95-Cys112. The C-type lectin domain maps to 11 to 121 (YDRYCYKPFK…CEQQHSFICK (111 aa)).

This sequence belongs to the snaclec family. In terms of assembly, heterodimer of subunits alpha and beta; disulfide-linked. As to expression, expressed by the venom gland.

Its subcellular location is the secreted. In terms of biological role, binds to the subunit GPIbalpha (GP1BA) of the platelet GPIb/V/IX receptor system. It inhibits ristocetin- and vWF-induced platelet aggregation in platelet-rich plasma by inhibiting the binding of vWF to GPIbalpha. This chain is Snaclec CHH-B subunit alpha, found in Crotalus horridus (Timber rattlesnake).